The sequence spans 222 residues: Thiopurine S-methyltransferase (222 aa).

S-adenosyl-L-methionine contacts are provided by Trp-10, Leu-45, Glu-66, and Arg-126.

Belongs to the class I-like SAM-binding methyltransferase superfamily. TPMT family.

It is found in the cytoplasm. The enzyme catalyses S-adenosyl-L-methionine + a thiopurine = S-adenosyl-L-homocysteine + a thiopurine S-methylether.. This Shewanella piezotolerans (strain WP3 / JCM 13877) protein is Thiopurine S-methyltransferase.